A 73-amino-acid chain; its full sequence is uncharacterized protein (73 aa).

The signal sequence occupies residues 1-30; the sequence is MVDFYFIEEKVAYRAAFTTTGKIAATLGLA.

This is an uncharacterized protein from Archaeoglobus fulgidus (strain ATCC 49558 / DSM 4304 / JCM 9628 / NBRC 100126 / VC-16).